A 352-amino-acid polypeptide reads, in one-letter code: UDP-3-O-acylglucosamine N-acyltransferase (352 aa).

H242 (proton acceptor) is an active-site residue.

It belongs to the transferase hexapeptide repeat family. LpxD subfamily. In terms of assembly, homotrimer.

It catalyses the reaction a UDP-3-O-[(3R)-3-hydroxyacyl]-alpha-D-glucosamine + a (3R)-hydroxyacyl-[ACP] = a UDP-2-N,3-O-bis[(3R)-3-hydroxyacyl]-alpha-D-glucosamine + holo-[ACP] + H(+). It participates in bacterial outer membrane biogenesis; LPS lipid A biosynthesis. In terms of biological role, catalyzes the N-acylation of UDP-3-O-acylglucosamine using 3-hydroxyacyl-ACP as the acyl donor. Is involved in the biosynthesis of lipid A, a phosphorylated glycolipid that anchors the lipopolysaccharide to the outer membrane of the cell. In Alkalilimnicola ehrlichii (strain ATCC BAA-1101 / DSM 17681 / MLHE-1), this protein is UDP-3-O-acylglucosamine N-acyltransferase.